We begin with the raw amino-acid sequence, 273 residues long: Nitrogenase iron protein (273 aa).

8 to 15 (GKGGIGKS) is a binding site for ATP. Position 95 (Cys-95) interacts with [4Fe-4S] cluster. At Arg-98 the chain carries ADP-ribosylarginine; by dinitrogenase reductase ADP-ribosyltransferase. Cys-130 is a binding site for [4Fe-4S] cluster.

This sequence belongs to the NifH/BchL/ChlL family. In terms of assembly, homodimer. Requires [4Fe-4S] cluster as cofactor. Post-translationally, the reversible ADP-ribosylation of Arg-98 inactivates the nitrogenase reductase and regulates nitrogenase activity.

The enzyme catalyses N2 + 8 reduced [2Fe-2S]-[ferredoxin] + 16 ATP + 16 H2O = H2 + 8 oxidized [2Fe-2S]-[ferredoxin] + 2 NH4(+) + 16 ADP + 16 phosphate + 6 H(+). Its function is as follows. The key enzymatic reactions in nitrogen fixation are catalyzed by the nitrogenase complex, which has 2 components: the iron protein and the molybdenum-iron protein. In Roseiflexus sp. (strain RS-1), this protein is Nitrogenase iron protein.